The sequence spans 314 residues: MNENLDLGNLSTIPIAPEGFKSGFVGIIGRPNVGKSTLMNQLIGQKIAITSPVSQTTRNRLQGILTTDKAQIIFVDTPGIHKPHHTLGKIIVKNAKTAINSVDIILLVVDSSVKSGGGDRYIIDLLKTVNQPVILGLNKSDQQTEKYQEIDESYANLIQDHNWPMIKFSALTGDGVETLQNTLIEQLEPGPYYYPPDLITDQPERFIMAELIREQILQLTRQEVPHSVAVTIEKVEESPKITKIFAAINVERSSQKGIIIGQKGNMLKAIGTTAREQIQKLIAGEVFLKLFVKVEPQWRQSNLRLAEFGYRVEE.

The 169-residue stretch at 21-189 folds into the Era-type G domain; that stretch reads KSGFVGIIGR…QNTLIEQLEP (169 aa). A G1 region spans residues 29–36; the sequence is GRPNVGKS. 29-36 lines the GTP pocket; the sequence is GRPNVGKS. Residues 55–59 are G2; that stretch reads QTTRN. The segment at 76 to 79 is G3; sequence DTPG. GTP contacts are provided by residues 76 to 80 and 138 to 141; these read DTPGI and NKSD. The segment at 138-141 is G4; the sequence is NKSD. The segment at 168-170 is G5; it reads FSA. The 85-residue stretch at 212–296 folds into the KH type-2 domain; sequence IREQILQLTR…FLKLFVKVEP (85 aa).

This sequence belongs to the TRAFAC class TrmE-Era-EngA-EngB-Septin-like GTPase superfamily. Era GTPase family. As to quaternary structure, monomer.

It is found in the cytoplasm. The protein resides in the cell inner membrane. In terms of biological role, an essential GTPase that binds both GDP and GTP, with rapid nucleotide exchange. Plays a role in 16S rRNA processing and 30S ribosomal subunit biogenesis and possibly also in cell cycle regulation and energy metabolism. This Crocosphaera subtropica (strain ATCC 51142 / BH68) (Cyanothece sp. (strain ATCC 51142)) protein is GTPase Era.